The following is a 599-amino-acid chain: Aspartate--tRNA ligase (599 aa).

Glu-180 contributes to the L-aspartate binding site. Positions Gln-204 to Lys-207 are aspartate. Arg-226 contacts L-aspartate. Residues Arg-226–Glu-228 and Gln-235 contribute to the ATP site. His-454 is a binding site for L-aspartate. Residue Glu-488 coordinates ATP. Residue Arg-495 coordinates L-aspartate. Residue Gly-540 to Arg-543 participates in ATP binding.

The protein belongs to the class-II aminoacyl-tRNA synthetase family. Type 1 subfamily. As to quaternary structure, homodimer.

The protein resides in the cytoplasm. It catalyses the reaction tRNA(Asp) + L-aspartate + ATP = L-aspartyl-tRNA(Asp) + AMP + diphosphate. Functionally, catalyzes the attachment of L-aspartate to tRNA(Asp) in a two-step reaction: L-aspartate is first activated by ATP to form Asp-AMP and then transferred to the acceptor end of tRNA(Asp). This is Aspartate--tRNA ligase from Clostridium botulinum (strain Eklund 17B / Type B).